The chain runs to 559 residues: Small ribosomal subunit protein bS1 (559 aa).

S1 motif domains follow at residues 21 to 87 (GAII…LSRE), 105 to 171 (DEVV…VSRR), 192 to 260 (GQQV…LGLK), 277 to 347 (GTRV…LGIK), 364 to 434 (GDRI…LGIK), and 451 to 520 (GSIV…LSVK).

Belongs to the bacterial ribosomal protein bS1 family.

In terms of biological role, binds mRNA; thus facilitating recognition of the initiation point. It is needed to translate mRNA with a short Shine-Dalgarno (SD) purine-rich sequence. In Pseudomonas aeruginosa (strain ATCC 15692 / DSM 22644 / CIP 104116 / JCM 14847 / LMG 12228 / 1C / PRS 101 / PAO1), this protein is Small ribosomal subunit protein bS1 (rpsA).